We begin with the raw amino-acid sequence, 201 residues long: Recombination protein RecR (201 aa).

The C4-type zinc finger occupies 60-75 (CKTCGNIDTQNPCTVC). Residues 83–178 (SIIVVVADVA…KVTRLAHGVP (96 aa)) form the Toprim domain.

Belongs to the RecR family.

May play a role in DNA repair. It seems to be involved in an RecBC-independent recombinational process of DNA repair. It may act with RecF and RecO. The polypeptide is Recombination protein RecR (Rhodopseudomonas palustris (strain HaA2)).